A 258-amino-acid chain; its full sequence is Glutamate racemase (258 aa).

Substrate-binding positions include 11 to 12 (DS) and 43 to 44 (YG). C74 serves as the catalytic Proton donor/acceptor. 75-76 (NT) contributes to the substrate binding site. Residue C187 is the Proton donor/acceptor of the active site. 188–189 (TH) provides a ligand contact to substrate.

Belongs to the aspartate/glutamate racemases family.

It carries out the reaction L-glutamate = D-glutamate. The protein operates within cell wall biogenesis; peptidoglycan biosynthesis. Its function is as follows. Provides the (R)-glutamate required for cell wall biosynthesis. The chain is Glutamate racemase from Bifidobacterium adolescentis (strain ATCC 15703 / DSM 20083 / NCTC 11814 / E194a).